The sequence spans 386 residues: Succinate--CoA ligase [ADP-forming] subunit beta (386 aa).

The ATP-grasp domain maps to K9 to E244. ATP contacts are provided by residues K46, G53–G55, E99, C102, and E107. 2 residues coordinate Mg(2+): N199 and D213. Substrate is bound by residues N264 and G320–M322.

This sequence belongs to the succinate/malate CoA ligase beta subunit family. As to quaternary structure, heterotetramer of two alpha and two beta subunits. It depends on Mg(2+) as a cofactor.

It catalyses the reaction succinate + ATP + CoA = succinyl-CoA + ADP + phosphate. The enzyme catalyses GTP + succinate + CoA = succinyl-CoA + GDP + phosphate. Its pathway is carbohydrate metabolism; tricarboxylic acid cycle; succinate from succinyl-CoA (ligase route): step 1/1. Functionally, succinyl-CoA synthetase functions in the citric acid cycle (TCA), coupling the hydrolysis of succinyl-CoA to the synthesis of either ATP or GTP and thus represents the only step of substrate-level phosphorylation in the TCA. The beta subunit provides nucleotide specificity of the enzyme and binds the substrate succinate, while the binding sites for coenzyme A and phosphate are found in the alpha subunit. This Ehrlichia ruminantium (strain Welgevonden) protein is Succinate--CoA ligase [ADP-forming] subunit beta.